The chain runs to 74 residues: Conotoxin MiK41 (74 aa).

Positions Met1–Ala22 are cleaved as a signal peptide. Residues Val23–Pro45 constitute a propeptide that is removed on maturation. Cystine bridges form between Cys48-Cys62, Cys55-Cys66, and Cys61-Cys73.

It belongs to the conotoxin O1 superfamily. In terms of tissue distribution, expressed by the venom duct.

The protein resides in the secreted. This is Conotoxin MiK41 from Conus miles (Soldier cone).